A 767-amino-acid polypeptide reads, in one-letter code: Protein ROLLING AND ERECT LEAF 2 (767 aa).

3 disordered regions span residues 1-20, 78-187, and 201-309; these read MGCT…CKER, PALA…SEFF, and RELE…SSTV. 2 stretches are compositionally biased toward pro residues: residues 81 to 90 and 110 to 126; these read APTPTPPPPS and APPP…PPPV. Over residues 145–155 the composition is skewed to low complexity; that stretch reads SDSSVASPARS. The segment covering 201-210 has biased composition (basic and acidic residues); that stretch reads RELEEEEKAR. Positions 221-232 are enriched in acidic residues; that stretch reads EDEVDDDDDERE. Residues 255-264 are compositionally biased toward basic and acidic residues; that stretch reads TRSEEGEMGN.

In terms of tissue distribution, highly expressed in young leaves and panicles. Expressed at low levels in roots.

The protein localises to the cell membrane. In terms of biological role, involved in the regulation of leaf shape formation. May function by coordinating the expression of genes associated with leaf and bulliform cell development. The protein is Protein ROLLING AND ERECT LEAF 2 of Oryza sativa subsp. japonica (Rice).